The sequence spans 279 residues: Replication protein A 32 kDa subunit A (279 aa).

The disordered stretch occupies residues Met1–Thr33. Positions Met19 to Ser32 are enriched in low complexity. The segment at residues Val73–Ile148 is a DNA-binding region (OB).

The protein belongs to the replication factor A protein 2 family. Heterotrimer of RPA1, RPA2 and RPA3 (canonical replication protein A complex). Interacts with ROS1. Binds to ASE1/At3g02920, PDX2, At5g62350, RPA1A/At2g06510, ARF1/At1g10630, At4g18590 and At3g52630. Phosphorylated in a cell-cycle-dependent manner (from the S phase until mitosis). In response to DNA damage, recruited to DNA-repair nuclear foci, as a hypophosphorylated form. As to expression, strongly expressed in shoot and root meristems. Present in seedlings, roots, leaves, siliques and flowers.

Its subcellular location is the nucleus. In terms of biological role, component of the replication protein A complex (RPA) required for DNA recombination, repair and replication. The activity of RPA is mediated by single-stranded DNA binding and protein interactions. Required fo cell division in meristems. Involved in the maintenance of transcriptional epigenetic gene silencing (TGS) at specific loci (including some transposons) by regulating histone H3 acetylation, 'Lys-4' and 'Lys-9' methylation. The sequence is that of Replication protein A 32 kDa subunit A (RPA2A) from Arabidopsis thaliana (Mouse-ear cress).